Reading from the N-terminus, the 140-residue chain is Ribosomal RNA large subunit methyltransferase H (140 aa).

S-adenosyl-L-methionine contacts are provided by residues L58, G90, and 108–113 (LSLLTF).

This sequence belongs to the RNA methyltransferase RlmH family. In terms of assembly, homodimer.

Its subcellular location is the cytoplasm. The enzyme catalyses pseudouridine(1915) in 23S rRNA + S-adenosyl-L-methionine = N(3)-methylpseudouridine(1915) in 23S rRNA + S-adenosyl-L-homocysteine + H(+). In terms of biological role, specifically methylates the pseudouridine at position 1915 (m3Psi1915) in 23S rRNA. In Protochlamydia amoebophila (strain UWE25), this protein is Ribosomal RNA large subunit methyltransferase H.